Here is a 211-residue protein sequence, read N- to C-terminus: Protein-lysine N-methyltransferase DDB_G0272708 (211 aa).

This sequence belongs to the class I-like SAM-binding methyltransferase superfamily. EFM5 family.

The protein localises to the cytoplasm. Its function is as follows. S-adenosyl-L-methionine-dependent protein-lysine N-methyltransferase that methylates elongation factor 1-alpha. This chain is Protein-lysine N-methyltransferase DDB_G0272708, found in Dictyostelium discoideum (Social amoeba).